A 251-amino-acid polypeptide reads, in one-letter code: Aliphatic sulfonates import ATP-binding protein SsuB (251 aa).

The 229-residue stretch at 3–231 (VSINEVSKYF…PRNKTSQSFQ (229 aa)) folds into the ABC transporter domain. Position 39–46 (39–46 (GPSGCGKS)) interacts with ATP.

The protein belongs to the ABC transporter superfamily. Aliphatic sulfonates importer (TC 3.A.1.17.2) family. As to quaternary structure, the complex is composed of two ATP-binding proteins (SsuB), two transmembrane proteins (SsuC) and a solute-binding protein (SsuA).

It localises to the cell membrane. It carries out the reaction ATP + H2O + aliphatic sulfonate-[sulfonate-binding protein]Side 1 = ADP + phosphate + aliphatic sulfonateSide 2 + [sulfonate-binding protein]Side 1.. Its function is as follows. Part of the ABC transporter complex SsuABC involved in aliphatic sulfonates import. Responsible for energy coupling to the transport system. The chain is Aliphatic sulfonates import ATP-binding protein SsuB from Bacillus anthracis.